The following is a 230-amino-acid chain: Translation initiation factor IF-3 (230 aa).

Disordered regions lie at residues 1 to 21 (MAIQ…RTNR) and 184 to 230 (LQSQ…AAQR). The segment covering 193–208 (AAAAAAPAAAPAAGAP) has biased composition (low complexity). Positions 209–220 (APAPAPAAPAPA) are enriched in pro residues. The segment covering 221–230 (PTAADPAAQR) has biased composition (low complexity).

Belongs to the IF-3 family. In terms of assembly, monomer.

Its subcellular location is the cytoplasm. Functionally, IF-3 binds to the 30S ribosomal subunit and shifts the equilibrium between 70S ribosomes and their 50S and 30S subunits in favor of the free subunits, thus enhancing the availability of 30S subunits on which protein synthesis initiation begins. This is Translation initiation factor IF-3 from Anaeromyxobacter dehalogenans (strain 2CP-1 / ATCC BAA-258).